We begin with the raw amino-acid sequence, 209 residues long: tRNA (guanine-N(7)-)-methyltransferase (209 aa).

Positions 35, 60, 87, and 113 each coordinate S-adenosyl-L-methionine. Asp-113 is an active-site residue. The substrate site is built by Lys-117 and Asp-149.

Belongs to the class I-like SAM-binding methyltransferase superfamily. TrmB family.

The enzyme catalyses guanosine(46) in tRNA + S-adenosyl-L-methionine = N(7)-methylguanosine(46) in tRNA + S-adenosyl-L-homocysteine. Its pathway is tRNA modification; N(7)-methylguanine-tRNA biosynthesis. Catalyzes the formation of N(7)-methylguanine at position 46 (m7G46) in tRNA. This is tRNA (guanine-N(7)-)-methyltransferase from Prochlorococcus marinus (strain AS9601).